The chain runs to 431 residues: tRNA-2-methylthio-N(6)-dimethylallyladenosine synthase (431 aa).

The 117-residue stretch at 4–120 (RAVYIKTFGC…IENIIENQVS (117 aa)) folds into the MTTase N-terminal domain. 6 residues coordinate [4Fe-4S] cluster: Cys-13, Cys-49, Cys-83, Cys-154, Cys-158, and Cys-161. The Radical SAM core domain maps to 140–367 (RKDCVKAWVN…LKLQDEITER (228 aa)). Residues 370-430 (KRLEGKIQEV…RHSLEGDIIS (61 aa)) form the TRAM domain.

Belongs to the methylthiotransferase family. MiaB subfamily. In terms of assembly, monomer. Requires [4Fe-4S] cluster as cofactor.

It localises to the cytoplasm. It catalyses the reaction N(6)-dimethylallyladenosine(37) in tRNA + (sulfur carrier)-SH + AH2 + 2 S-adenosyl-L-methionine = 2-methylsulfanyl-N(6)-dimethylallyladenosine(37) in tRNA + (sulfur carrier)-H + 5'-deoxyadenosine + L-methionine + A + S-adenosyl-L-homocysteine + 2 H(+). Its function is as follows. Catalyzes the methylthiolation of N6-(dimethylallyl)adenosine (i(6)A), leading to the formation of 2-methylthio-N6-(dimethylallyl)adenosine (ms(2)i(6)A) at position 37 in tRNAs that read codons beginning with uridine. The chain is tRNA-2-methylthio-N(6)-dimethylallyladenosine synthase from Thermodesulfovibrio yellowstonii (strain ATCC 51303 / DSM 11347 / YP87).